The chain runs to 288 residues: MIKFEKVNYTYQPNSPFASRALFDIDLEVKKGSYTALIGHTGSGKSTLLQHLNGLLQPTQGTVRVGDIVVTSTSKQKEIKPVRKKVGVVFQFPESQLFEETVLKDVAFGPQNFGISKEEAEKIAAEKLEMVGLSKEFWEKSPFELSGGQMRRVAIAGILAMEPEVLVLDEPTAGLDPKARIEMMKLFESIHQTGQTVVLVTHLMDDVADYADYVYLLEKGHIISCGTPSDVFQEVDFLKAHELGVPKATHFADQLQKTGVYTFEKLPITRAELVNLLTSLSVKSGGEN.

The ABC transporter domain occupies 2-244 (IKFEKVNYTY…VDFLKAHELG (243 aa)). 39-46 (GHTGSGKS) is an ATP binding site.

Belongs to the ABC transporter superfamily. Energy-coupling factor EcfA family. As to quaternary structure, forms a stable energy-coupling factor (ECF) transporter complex composed of 2 membrane-embedded substrate-binding proteins (S component), 2 ATP-binding proteins (A component) and 2 transmembrane proteins (T component).

Its subcellular location is the cell membrane. Its function is as follows. ATP-binding (A) component of a common energy-coupling factor (ECF) ABC-transporter complex. Unlike classic ABC transporters this ECF transporter provides the energy necessary to transport a number of different substrates. The chain is Energy-coupling factor transporter ATP-binding protein EcfA2 from Lactococcus lactis subsp. lactis (strain IL1403) (Streptococcus lactis).